We begin with the raw amino-acid sequence, 553 residues long: CTP synthase (553 aa).

The segment at 1–270 (MTKYVFVTGG…DELICEELKL (270 aa)) is amidoligase domain. Serine 13 is a binding site for CTP. Serine 13 contributes to the UTP binding site. Residues 14–19 (SLGKGI) and aspartate 71 each bind ATP. The Mg(2+) site is built by aspartate 71 and glutamate 144. Residues 151–153 (DIE), 191–196 (KTKPTQ), and lysine 227 each bind CTP. UTP-binding positions include 191-196 (KTKPTQ) and lysine 227. One can recognise a Glutamine amidotransferase type-1 domain in the interval 295-547 (TIGMVGKYVE…VEAARAHHEA (253 aa)). Glycine 356 provides a ligand contact to L-glutamine. Cysteine 383 (nucleophile; for glutamine hydrolysis) is an active-site residue. L-glutamine contacts are provided by residues 384–387 (LGMQ), glutamate 407, and arginine 473. Active-site residues include histidine 520 and glutamate 522.

It belongs to the CTP synthase family. Homotetramer.

The catalysed reaction is UTP + L-glutamine + ATP + H2O = CTP + L-glutamate + ADP + phosphate + 2 H(+). It carries out the reaction L-glutamine + H2O = L-glutamate + NH4(+). It catalyses the reaction UTP + NH4(+) + ATP = CTP + ADP + phosphate + 2 H(+). It participates in pyrimidine metabolism; CTP biosynthesis via de novo pathway; CTP from UDP: step 2/2. Its activity is regulated as follows. Allosterically activated by GTP, when glutamine is the substrate; GTP has no effect on the reaction when ammonia is the substrate. The allosteric effector GTP functions by stabilizing the protein conformation that binds the tetrahedral intermediate(s) formed during glutamine hydrolysis. Inhibited by the product CTP, via allosteric rather than competitive inhibition. Its function is as follows. Catalyzes the ATP-dependent amination of UTP to CTP with either L-glutamine or ammonia as the source of nitrogen. Regulates intracellular CTP levels through interactions with the four ribonucleotide triphosphates. The protein is CTP synthase of Paraburkholderia phymatum (strain DSM 17167 / CIP 108236 / LMG 21445 / STM815) (Burkholderia phymatum).